The chain runs to 460 residues: Cysteine--tRNA ligase (460 aa).

Cys-29 serves as a coordination point for Zn(2+). Residues Met-31–His-41 carry the 'HIGH' region motif. Zn(2+) contacts are provided by Cys-210, His-235, and Glu-239. The 'KMSKS' region motif lies at Lys-267–Ser-271. Position 270 (Lys-270) interacts with ATP.

This sequence belongs to the class-I aminoacyl-tRNA synthetase family. As to quaternary structure, monomer. The cofactor is Zn(2+).

The protein localises to the cytoplasm. It catalyses the reaction tRNA(Cys) + L-cysteine + ATP = L-cysteinyl-tRNA(Cys) + AMP + diphosphate. In Coxiella burnetii (strain RSA 493 / Nine Mile phase I), this protein is Cysteine--tRNA ligase.